Here is an 862-residue protein sequence, read N- to C-terminus: Genome polyprotein (862 aa).

Gly2 is lipidated: N-myristoyl glycine; by host.

This sequence belongs to the picornaviruses polyprotein family. Interacts with capsid protein VP1 and capsid protein VP3 to form heterotrimeric protomers. In terms of assembly, interacts with capsid protein VP0, and capsid protein VP3 to form heterotrimeric protomers. Five protomers subsequently associate to form pentamers which serve as building blocks for the capsid. Interacts with capsid protein VP2, capsid protein VP3 and capsid protein VP4 following cleavage of capsid protein VP0. As to quaternary structure, interacts with capsid protein VP1 and capsid protein VP3 in the mature capsid. Interacts with capsid protein VP0 and capsid protein VP1 to form heterotrimeric protomers. Five protomers subsequently associate to form pentamers which serve as building blocks for the capsid. Interacts with capsid protein VP4 in the mature capsid. Interacts with protein 2C; this interaction may be important for virion morphogenesis. In terms of assembly, interacts with capsid protein VP1 and capsid protein VP3. Post-translationally, specific enzymatic cleavages in vivo by the viral proteases yield processing intermediates and the mature proteins. In terms of processing, myristoylation is required for the formation of pentamers during virus assembly. Further assembly of 12 pentamers and a molecule of genomic RNA generates the provirion. During virion maturation, immature virions are rendered infectious following cleavage of VP0 into VP4 and VP2. This maturation seems to be an autocatalytic event triggered by the presence of RNA in the capsid and it is followed by a conformational change infectious virion. Post-translationally, myristoylation is required during RNA encapsidation and formation of the mature virus particle.

It is found in the virion. The protein localises to the host cytoplasm. In terms of biological role, forms an icosahedral capsid of pseudo T=3 symmetry with capsid proteins VP2 and VP3. The capsid is 300 Angstroms in diameter, composed of 60 copies of each capsid protein and enclosing the viral positive strand RNA genome. Capsid protein VP1 mainly forms the vertices of the capsid. Capsid protein VP1 interacts with host cell receptor to provide virion attachment to target host cells. This attachment induces virion internalization. Tyrosine kinases are probably involved in the entry process. After binding to its receptor, the capsid undergoes conformational changes. Capsid protein VP1 N-terminus (that contains an amphipathic alpha-helix) and capsid protein VP4 are externalized. Together, they shape a pore in the host membrane through which viral genome is translocated to host cell cytoplasm. Functionally, forms an icosahedral capsid of pseudo T=3 symmetry with capsid proteins VP2 and VP3. The capsid is 300 Angstroms in diameter, composed of 60 copies of each capsid protein and enclosing the viral positive strand RNA genome. Its function is as follows. Lies on the inner surface of the capsid shell. After binding to the host receptor, the capsid undergoes conformational changes. Capsid protein VP4 is released, Capsid protein VP1 N-terminus is externalized, and together, they shape a pore in the host membrane through which the viral genome is translocated into the host cell cytoplasm. Component of immature procapsids, which is cleaved into capsid proteins VP4 and VP2 after maturation. Allows the capsid to remain inactive before the maturation step. This chain is Genome polyprotein, found in Echovirus 16 (strain Harrington).